A 145-amino-acid chain; its full sequence is uncharacterized protein (145 aa).

This is an uncharacterized protein from Rickettsia prowazekii (strain Madrid E).